Reading from the N-terminus, the 471-residue chain is Siroheme synthase 1 (471 aa).

The segment at 1 to 203 is precorrin-2 dehydrogenase /sirohydrochlorin ferrochelatase; sequence MEYLPLFAQL…GDTRAAEAVL (203 aa). Residues 22–23 and 43–44 contribute to the NAD(+) site; these read EV and KK. Ser128 carries the phosphoserine modification. The segment at 215 to 471 is uroporphyrinogen-III C-methyltransferase; it reads GEIILVGAGP…NLRSSVVNLA (257 aa). Pro224 lines the S-adenosyl-L-methionine pocket. Catalysis depends on Asp247, which acts as the Proton acceptor. Lys269 functions as the Proton donor in the catalytic mechanism. Residues 300–302, Ile305, 330–331, Met382, and Gly411 each bind S-adenosyl-L-methionine; these read GGD and TA.

In the N-terminal section; belongs to the precorrin-2 dehydrogenase / sirohydrochlorin ferrochelatase family. This sequence in the C-terminal section; belongs to the precorrin methyltransferase family.

It catalyses the reaction uroporphyrinogen III + 2 S-adenosyl-L-methionine = precorrin-2 + 2 S-adenosyl-L-homocysteine + H(+). The enzyme catalyses precorrin-2 + NAD(+) = sirohydrochlorin + NADH + 2 H(+). The catalysed reaction is siroheme + 2 H(+) = sirohydrochlorin + Fe(2+). The protein operates within cofactor biosynthesis; adenosylcobalamin biosynthesis; precorrin-2 from uroporphyrinogen III: step 1/1. It participates in cofactor biosynthesis; adenosylcobalamin biosynthesis; sirohydrochlorin from precorrin-2: step 1/1. It functions in the pathway porphyrin-containing compound metabolism; siroheme biosynthesis; precorrin-2 from uroporphyrinogen III: step 1/1. Its pathway is porphyrin-containing compound metabolism; siroheme biosynthesis; siroheme from sirohydrochlorin: step 1/1. The protein operates within porphyrin-containing compound metabolism; siroheme biosynthesis; sirohydrochlorin from precorrin-2: step 1/1. Multifunctional enzyme that catalyzes the SAM-dependent methylations of uroporphyrinogen III at position C-2 and C-7 to form precorrin-2 via precorrin-1. Then it catalyzes the NAD-dependent ring dehydrogenation of precorrin-2 to yield sirohydrochlorin. Finally, it catalyzes the ferrochelation of sirohydrochlorin to yield siroheme. The sequence is that of Siroheme synthase 1 from Cronobacter sakazakii (strain ATCC BAA-894) (Enterobacter sakazakii).